The following is a 347-amino-acid chain: D-fructose 1,6-bisphosphatase class 2/sedoheptulose 1,7-bisphosphatase (347 aa).

Aspartate 33, glutamate 57, aspartate 97, and glutamate 100 together coordinate Mn(2+). Residues 100 to 102 (EGT), tyrosine 131, 176 to 178 (RKR), and 198 to 200 (DGD) contribute to the substrate site. Glutamate 225 lines the Mn(2+) pocket.

Belongs to the FBPase class 2 family. Homotetramer. Requires Mn(2+) as cofactor.

The enzyme catalyses beta-D-fructose 1,6-bisphosphate + H2O = beta-D-fructose 6-phosphate + phosphate. It catalyses the reaction D-sedoheptulose 1,7-bisphosphate + H2O = D-sedoheptulose 7-phosphate + phosphate. It functions in the pathway carbohydrate biosynthesis; Calvin cycle. In terms of biological role, catalyzes the hydrolysis of fructose 1,6-bisphosphate (Fru 1,6-P2) and sedoheptulose 1,7-bisphosphate (Sed 1,7-P2) to fructose 6-phosphate and sedoheptulose 7-phosphate, respectively. The protein is D-fructose 1,6-bisphosphatase class 2/sedoheptulose 1,7-bisphosphatase of Synechococcus sp. (strain JA-2-3B'a(2-13)) (Cyanobacteria bacterium Yellowstone B-Prime).